A 346-amino-acid chain; its full sequence is Fe(3+) ions import ATP-binding protein FbpC 2 (346 aa).

In terms of domain architecture, ABC transporter spans 5–235 (LEVDGVDKSF…PVDVPTAEFI (231 aa)). 37–44 (GPSGCGKT) contacts ATP.

This sequence belongs to the ABC transporter superfamily. Fe(3+) ion importer (TC 3.A.1.10) family. The complex is composed of two ATP-binding proteins (FbpC), two transmembrane proteins (FbpB) and a solute-binding protein (FbpA).

The protein localises to the cell membrane. The catalysed reaction is Fe(3+)(out) + ATP + H2O = Fe(3+)(in) + ADP + phosphate + H(+). Part of the ABC transporter complex FbpABC involved in Fe(3+) ions import. Responsible for energy coupling to the transport system. This is Fe(3+) ions import ATP-binding protein FbpC 2 from Rhodococcus jostii (strain RHA1).